The following is a 291-amino-acid chain: Feruloyl esterase B (291 aa).

The signal sequence occupies residues 1 to 18 (MLVRSFLGFAVLAATCLA). Residue Asn117 is glycosylated (N-linked (GlcNAc...) asparagine). Ser136 functions as the Charge relay system in the catalytic mechanism. N-linked (GlcNAc...) asparagine glycosylation is present at Asn179.

This sequence belongs to the carbohydrate esterase 1 (CE1) family. Feruloyl esterase type B subfamily.

The protein resides in the secreted. The catalysed reaction is feruloyl-polysaccharide + H2O = ferulate + polysaccharide.. Functionally, feruloyl esterase which acts in synergy with xylanases in degradation of plant cell walls. Hydrolyzes the ester linkage of hydroxycinnamic acids (ferulic acid (FA) and p-coumaric acid) and diferulates present in plant cell walls. Is active on substrates containing ferulic acid ester linked to the C-5 and C-2 linkages of arabinofuranose, while it was found capable of de-esterifying acetylated glucuronoxylans. Efficiently releases ferulic acid (FA) from destarched wheat bran when incubated with an M3 xylanase. This chain is Feruloyl esterase B (Fae1a), found in Thermothelomyces thermophilus (strain ATCC 42464 / BCRC 31852 / DSM 1799) (Sporotrichum thermophile).